Here is a 440-residue protein sequence, read N- to C-terminus: COP9 signalosome complex subunit 4 (440 aa).

The PCI domain occupies 216–386; that stretch reads SNRQFLAASQ…RIIYFESGLE (171 aa).

Belongs to the CSN4 family. In terms of assembly, component of the COP9 signalosome (CSN) complex.

The protein localises to the cytoplasm. It is found in the nucleus. Functionally, component of the COP9 signalosome (CSN) complex that acts as an regulator of the ubiquitin (Ubl) conjugation pathway by mediating the deneddylation of the cullin subunit of SCF-type E3 ubiquitin-protein ligase complexes. The CSN complex is involved in the regulation of the circadian clock through its control of the stability of the SCF(FWD1) complex. This is COP9 signalosome complex subunit 4 (csn-4) from Neurospora crassa (strain ATCC 24698 / 74-OR23-1A / CBS 708.71 / DSM 1257 / FGSC 987).